The sequence spans 445 residues: MREILHIQGGQCGNQIGAKFWEVICDEHGIDGTGRYAGDSDLQLERINVYYNEASGGRFVPRAVLMDLEPGTMDSVRSGPFGQIFRPDNFVFGQSGAGNNWAKGHYTEGAELIDSVLDVVRKEAENCDCLQGFQVCHSLGGGTGSGMGTLLISKIREEYPDRMMLTFSVFPSPKVSDTVVEPYNATLSVHQLVENADECMVLDNEALYDICFRTLKLATPSFGELNHLISATMSGVTCCLRFPGQLNSDLRKLAVNLIPFPRLHFFMVGFAPLTSRGSQMYRALTVPELTQQMWDAKNMMCAADPRHGRYLTASACFRGKMSTKEVDEQMLNVQNKNSSYFVEWIPNNVKSSVCDMPPRGLKMAGTFVGNSTSIQEMFRRVSEQFTAMFRRKAFLHWYTGEGMDEMEFTEAESNMNDLVAEYQQYQDATADEEYDEEEEEERDAE.

Residues Q11, E69, S138, G142, T143, G144, N204, and N226 each coordinate GTP. Mg(2+) is bound at residue E69. Residues 421 to 445 form a disordered region; the sequence is EYQQYQDATADEEYDEEEEEERDAE. Over residues 429-445 the composition is skewed to acidic residues; the sequence is TADEEYDEEEEEERDAE.

It belongs to the tubulin family. As to quaternary structure, dimer of alpha and beta chains. A typical microtubule is a hollow water-filled tube with an outer diameter of 25 nm and an inner diameter of 15 nM. Alpha-beta heterodimers associate head-to-tail to form protofilaments running lengthwise along the microtubule wall with the beta-tubulin subunit facing the microtubule plus end conferring a structural polarity. Microtubules usually have 13 protofilaments but different protofilament numbers can be found in some organisms and specialized cells. Mg(2+) is required as a cofactor.

It is found in the cytoplasm. It localises to the cytoskeleton. Its function is as follows. Tubulin is the major constituent of microtubules, a cylinder consisting of laterally associated linear protofilaments composed of alpha- and beta-tubulin heterodimers. Microtubules grow by the addition of GTP-tubulin dimers to the microtubule end, where a stabilizing cap forms. Below the cap, tubulin dimers are in GDP-bound state, owing to GTPase activity of alpha-tubulin. This chain is Tubulin beta-4 chain (TUBB4), found in Triticum aestivum (Wheat).